A 360-amino-acid chain; its full sequence is Photosystem II protein D1 (360 aa).

The next 3 helical transmembrane spans lie at 29 to 46 (YIGW…TATT), 118 to 133 (HFLL…EWEF), and 142 to 156 (WISV…AASA). His118 lines the chlorophyll a pocket. Trp126 contributes to the pheophytin a binding site. [CaMn4O5] cluster-binding residues include Asp170 and Glu189. A helical transmembrane segment spans residues 197 to 218 (FHQLGVAGVFGGSLFSAMHGSL). His198 provides a ligand contact to chlorophyll a. A quinone contacts are provided by residues His215 and 264 to 265 (SF). A Fe cation-binding site is contributed by His215. His272 is a binding site for Fe cation. Residues 274-288 (FLGLWPVVGIWFTAL) traverse the membrane as a helical segment. Positions 332, 333, 342, and 344 each coordinate [CaMn4O5] cluster. A propeptide spanning residues 345–360 (SGESLPVALTAPAVIG) is cleaved from the precursor.

The protein belongs to the reaction center PufL/M/PsbA/D family. PSII is composed of 1 copy each of membrane proteins PsbA, PsbB, PsbC, PsbD, PsbE, PsbF, PsbH, PsbI, PsbJ, PsbK, PsbL, PsbM, PsbT, PsbX, PsbY, PsbZ, Psb30/Ycf12, at least 3 peripheral proteins of the oxygen-evolving complex and a large number of cofactors. It forms dimeric complexes. The D1/D2 heterodimer binds P680, chlorophylls that are the primary electron donor of PSII, and subsequent electron acceptors. It shares a non-heme iron and each subunit binds pheophytin, quinone, additional chlorophylls, carotenoids and lipids. D1 provides most of the ligands for the Mn4-Ca-O5 cluster of the oxygen-evolving complex (OEC). There is also a Cl(-1) ion associated with D1 and D2, which is required for oxygen evolution. The PSII complex binds additional chlorophylls, carotenoids and specific lipids. is required as a cofactor. Post-translationally, tyr-161 forms a radical intermediate that is referred to as redox-active TyrZ, YZ or Y-Z. In terms of processing, C-terminally processed by CTPA; processing is essential to allow assembly of the oxygen-evolving complex and thus photosynthetic growth.

The protein resides in the plastid. The protein localises to the chloroplast thylakoid membrane. The enzyme catalyses 2 a plastoquinone + 4 hnu + 2 H2O = 2 a plastoquinol + O2. In terms of biological role, photosystem II (PSII) is a light-driven water:plastoquinone oxidoreductase that uses light energy to abstract electrons from H(2)O, generating O(2) and a proton gradient subsequently used for ATP formation. It consists of a core antenna complex that captures photons, and an electron transfer chain that converts photonic excitation into a charge separation. The D1/D2 (PsbA/PsbD) reaction center heterodimer binds P680, the primary electron donor of PSII as well as several subsequent electron acceptors. The chain is Photosystem II protein D1 from Guillardia theta (Cryptophyte).